The primary structure comprises 266 residues: Aspartate/glutamate leucyltransferase (266 aa).

This sequence belongs to the R-transferase family. Bpt subfamily.

The protein resides in the cytoplasm. It catalyses the reaction N-terminal L-glutamyl-[protein] + L-leucyl-tRNA(Leu) = N-terminal L-leucyl-L-glutamyl-[protein] + tRNA(Leu) + H(+). The catalysed reaction is N-terminal L-aspartyl-[protein] + L-leucyl-tRNA(Leu) = N-terminal L-leucyl-L-aspartyl-[protein] + tRNA(Leu) + H(+). In terms of biological role, functions in the N-end rule pathway of protein degradation where it conjugates Leu from its aminoacyl-tRNA to the N-termini of proteins containing an N-terminal aspartate or glutamate. The sequence is that of Aspartate/glutamate leucyltransferase from Rhizorhabdus wittichii (strain DSM 6014 / CCUG 31198 / JCM 15750 / NBRC 105917 / EY 4224 / RW1) (Sphingomonas wittichii).